The following is a 180-amino-acid chain: Dual-action ribosomal maturation protein DarP (180 aa).

Belongs to the DarP family.

Its subcellular location is the cytoplasm. In terms of biological role, member of a network of 50S ribosomal subunit biogenesis factors which assembles along the 30S-50S interface, preventing incorrect 23S rRNA structures from forming. Promotes peptidyl transferase center (PTC) maturation. The protein is Dual-action ribosomal maturation protein DarP of Chromobacterium violaceum (strain ATCC 12472 / DSM 30191 / JCM 1249 / CCUG 213 / NBRC 12614 / NCIMB 9131 / NCTC 9757 / MK).